A 200-amino-acid polypeptide reads, in one-letter code: Probable nicotinate-nucleotide adenylyltransferase (200 aa).

This sequence belongs to the NadD family.

The catalysed reaction is nicotinate beta-D-ribonucleotide + ATP + H(+) = deamido-NAD(+) + diphosphate. It participates in cofactor biosynthesis; NAD(+) biosynthesis; deamido-NAD(+) from nicotinate D-ribonucleotide: step 1/1. In terms of biological role, catalyzes the reversible adenylation of nicotinate mononucleotide (NaMN) to nicotinic acid adenine dinucleotide (NaAD). This is Probable nicotinate-nucleotide adenylyltransferase from Lachnoclostridium phytofermentans (strain ATCC 700394 / DSM 18823 / ISDg) (Clostridium phytofermentans).